A 409-amino-acid chain; its full sequence is Elongation factor Tu, chloroplastic (409 aa).

Residues 10–214 form the tr-type G domain; it reads KPHVNIGTIG…TVDAYIPTPE (205 aa). The G1 stretch occupies residues 19-26; it reads GHVDHGKT. A GTP-binding site is contributed by 19–26; sequence GHVDHGKT. A Mg(2+)-binding site is contributed by Thr-26. A G2 region spans residues 60–64; that stretch reads GITIN. A G3 region spans residues 81–84; the sequence is DCPG. GTP-binding positions include 81-85 and 136-139; these read DCPGH and NKED. A G4 region spans residues 136–139; the sequence is NKED. Positions 174 to 176 are G5; the sequence is SAL.

It belongs to the TRAFAC class translation factor GTPase superfamily. Classic translation factor GTPase family. EF-Tu/EF-1A subfamily.

The protein localises to the plastid. Its subcellular location is the chloroplast. It catalyses the reaction GTP + H2O = GDP + phosphate + H(+). In terms of biological role, GTP hydrolase that promotes the GTP-dependent binding of aminoacyl-tRNA to the A-site of ribosomes during protein biosynthesis. In Pleurastrum terricola (Filamentous green alga), this protein is Elongation factor Tu, chloroplastic (tufA).